The chain runs to 182 residues: Adenylate kinase (182 aa).

Residue 12-17 (GAGKGT) participates in ATP binding. The NMP stretch occupies residues 32–61 (STGDLLRDEVSSGSVLGIKAAEIMNKGELV). AMP is bound by residues T33, R38, 59 to 61 (ELV), 85 to 88 (GFPR), and Q92. An LID region spans residues 126-132 (ERGRQDD). R127 is a binding site for ATP. Residues R129 and R140 each coordinate AMP. A168 provides a ligand contact to ATP.

This sequence belongs to the adenylate kinase family. As to quaternary structure, monomer.

The protein resides in the cytoplasm. The catalysed reaction is AMP + ATP = 2 ADP. It functions in the pathway purine metabolism; AMP biosynthesis via salvage pathway; AMP from ADP: step 1/1. Catalyzes the reversible transfer of the terminal phosphate group between ATP and AMP. Plays an important role in cellular energy homeostasis and in adenine nucleotide metabolism. The chain is Adenylate kinase from Prochlorococcus marinus (strain NATL2A).